Reading from the N-terminus, the 544-residue chain is MEESTAPIEAHAAAGAEAGAEGGEGVSVPPPPQFEAAGASAGVSSAPLQQASGLAPLLVTPGPAIRRAASLRPAPAEGGGARSGPERNSGSWTKQILCRYYLHGQCKEGDNCRYSHDLSGRRRSRGGQDAQPRASADRGPKMATRWEPPTQEVAEAPPAASSSSLPLIGSAAERGFTEAEIDNAGIRSAAERGFSEAEIDNASLAAGAAAGAGAEGWEGAIEFVPGQPYRGRMVPPHGPEAPLQSPAIEREHMAMGMGMPMPVPMPMPVPMPVPMPLPLCRYAARGQCLRGDRCAYPHGEICDMCGQQALHPWDAAQQEAHRRACVEAHERDMELSFAVQRSMDKVCGICMEVVYEKADPSDRRFGILFSCNHTYCLRCIRRWRSATQFENRISKSCPQCRVSSGFVIPSEFWVEEEEEKEKLVQQYKEGMSQKACRYFAGGLGHCPFGEFCFYKHEYPEGWRDQPPRPDGGGSSSAYWHQVLEPVQLREGNVLFKSRKKEHSVLRLANQLLKKLLCLRGSSSFSDDRWLLLQYQLEEYFSLNL.

Disordered stretches follow at residues 1–46 (MEES…VSSA) and 117–144 (DLSG…KMAT). 2 stretches are compositionally biased toward low complexity: residues 9-19 (EAHAAAGAEAG) and 36-46 (AAGASAGVSSA). 2 C3H1-type zinc fingers span residues 92–119 (WTKQ…HDLS) and 274–301 (PMPL…HGEI). The makorin-type Cys-His stretch occupies residues 302–329 (CDMCGQQALHPWDAAQQEAHRRACVEAH). An RING-type zinc finger spans residues 347 to 401 (CGICMEVVYEKADPSDRRFGILFSCNHTYCLRCIRRWRSATQFENRISKSCPQCR). The segment at 430-459 (GMSQKACRYFAGGLGHCPFGEFCFYKHEYP) adopts a C3H1-type 3 zinc-finger fold.

In terms of tissue distribution, mainly expressed in mouse brain and reproductive system including testis and ovary. Ubiquitously detected at low levels throughout the entire embryo, but expression is highest in the ventricular layers of the brain.

It is found in the nucleus. The enzyme catalyses S-ubiquitinyl-[E2 ubiquitin-conjugating enzyme]-L-cysteine + [acceptor protein]-L-lysine = [E2 ubiquitin-conjugating enzyme]-L-cysteine + N(6)-ubiquitinyl-[acceptor protein]-L-lysine.. Its pathway is protein modification; protein ubiquitination. E3 ubiquitin ligase catalyzing the covalent attachment of ubiquitin moieties onto substrate proteins. Acts as a key developmental timer that helps ensure puberty begins at the appropriate age, by inhibiting premature activation of the reproductive hormone cascade. Epigenetically regulates GNRH1 transcription by disrupting the binding of methyl-DNA binding protein 3/MBD3 to the promoter of GNRH1. Mechanistically, mediates the non-proteolytic ubiquitination of MBD3 at multiple sites with 'Lys27' ubiquitin linkages and thereby regulates the methylation status of the genome, including GNRH1 promoter. Modulates the stability and translation of GNRH1 mRNA by mediating the non-proteolytic ubiquitination of PABP family members PABPC1, PABPC3 and PABPC4 at multiple sites. Also participates in the maintenance of genomic and epigenomic stability by regulating the abundance of APEX2 via 'Lys-48'-linked ubiquitination. In Mus musculus (Mouse), this protein is E3 ubiquitin-protein ligase makorin-3 (Mkrn3).